The following is a 433-amino-acid chain: Ribosome biogenesis protein WDR12 homolog (433 aa).

Position 1 is an N-acetylmethionine (Met-1). Residues 12–96 (LHVKFVTKLD…ERTLEIEYIR (85 aa)) are ubiquitin-like (UBL) domain. 7 WD repeats span residues 108-146 (LHDDWVSAVNGSSPRFILTGCYDGLGRVWSSAGSCSHIL), 148-191 (GHSG…SVDS), 203-242 (GHKASVQSVSAQKSGNMVCSSSWDCTINLWNTNESTSEGE), 270-308 (GHTQCVSSVVWPEHDVIYSSSWDHSVRRWDVETGKDSLN), 310-350 (FCGK…TSAP), 356-396 (SHSS…PLSV), and 399-433 (THNDKVLSADWWKGESVVSGGADSNLRISSGIAIS). The interval 238 to 263 (TSEGESVSVKKRKGNNQAEESQSEGE) is disordered.

The protein belongs to the WD repeat WDR12/YTM1 family. In terms of assembly, interacts with PES. Interacts with BOP1.

The protein resides in the nucleus. It localises to the nucleolus. Its subcellular location is the nucleoplasm. In terms of biological role, required for maturation of ribosomal RNAs and formation of the large ribosomal subunit. This Arabidopsis thaliana (Mouse-ear cress) protein is Ribosome biogenesis protein WDR12 homolog.